We begin with the raw amino-acid sequence, 163 residues long: MQHYVTPDLCDAYPDLVQVLEPMFSNFGGRDSFGGQIVTIKCFEDNSLVKEQVELDGKGKVLVVDGGGSLRRALLGDMLAEKAAKNGWEGLVIYGCVRDVDVLIQTDVGVQALASHPMKTDKRGIGDLNVVVAFAGVTFRPGEYVYADNNGVLVSPSPLEMPE.

Substrate is bound by residues 76–79 (GDML) and Arg98. Asp99 contributes to the a divalent metal cation binding site.

Belongs to the class II aldolase/RraA-like family. Homotrimer. Requires a divalent metal cation as cofactor.

It carries out the reaction 4-hydroxy-4-methyl-2-oxoglutarate = 2 pyruvate. It catalyses the reaction oxaloacetate + H(+) = pyruvate + CO2. Catalyzes the aldol cleavage of 4-hydroxy-4-methyl-2-oxoglutarate (HMG) into 2 molecules of pyruvate. Also contains a secondary oxaloacetate (OAA) decarboxylase activity due to the common pyruvate enolate transition state formed following C-C bond cleavage in the retro-aldol and decarboxylation reactions. This chain is Putative 4-hydroxy-4-methyl-2-oxoglutarate aldolase, found in Pseudomonas putida (strain GB-1).